Here is a 55-residue protein sequence, read N- to C-terminus: Large ribosomal subunit protein bL33 (55 aa).

It belongs to the bacterial ribosomal protein bL33 family.

This Pectobacterium carotovorum subsp. carotovorum (strain PC1) protein is Large ribosomal subunit protein bL33.